Here is a 287-residue protein sequence, read N- to C-terminus: Formamidopyrimidine-DNA glycosylase (287 aa).

Catalysis depends on Pro-2, which acts as the Schiff-base intermediate with DNA. The active-site Proton donor is Glu-3. Lys-58 (proton donor; for beta-elimination activity) is an active-site residue. DNA is bound by residues His-104, Arg-123, and Arg-166. Residues 251 to 287 (RTYDREGQPCRNDGCRGVIGREVQAGRSTFYCPVCQR) form an FPG-type zinc finger. Residue Arg-277 is the Proton donor; for delta-elimination activity of the active site.

It belongs to the FPG family. Monomer. The cofactor is Zn(2+).

It catalyses the reaction Hydrolysis of DNA containing ring-opened 7-methylguanine residues, releasing 2,6-diamino-4-hydroxy-5-(N-methyl)formamidopyrimidine.. The enzyme catalyses 2'-deoxyribonucleotide-(2'-deoxyribose 5'-phosphate)-2'-deoxyribonucleotide-DNA = a 3'-end 2'-deoxyribonucleotide-(2,3-dehydro-2,3-deoxyribose 5'-phosphate)-DNA + a 5'-end 5'-phospho-2'-deoxyribonucleoside-DNA + H(+). Involved in base excision repair of DNA damaged by oxidation or by mutagenic agents. Acts as a DNA glycosylase that recognizes and removes damaged bases. Has a preference for oxidized purines, such as 7,8-dihydro-8-oxoguanine (8-oxoG). Has AP (apurinic/apyrimidinic) lyase activity and introduces nicks in the DNA strand. Cleaves the DNA backbone by beta-delta elimination to generate a single-strand break at the site of the removed base with both 3'- and 5'-phosphates. In Phenylobacterium zucineum (strain HLK1), this protein is Formamidopyrimidine-DNA glycosylase.